A 271-amino-acid chain; its full sequence is Phosphonoacetaldehyde hydrolase (271 aa).

Catalysis depends on D12, which acts as the Nucleophile. Mg(2+) is bound by residues D12 and A14. K54 acts as the Schiff-base intermediate with substrate in catalysis. Residue D188 coordinates Mg(2+).

It belongs to the HAD-like hydrolase superfamily. PhnX family. As to quaternary structure, homodimer. Mg(2+) is required as a cofactor.

The enzyme catalyses phosphonoacetaldehyde + H2O = acetaldehyde + phosphate + H(+). In terms of biological role, involved in phosphonate degradation. In Vibrio campbellii (strain ATCC BAA-1116), this protein is Phosphonoacetaldehyde hydrolase.